The chain runs to 599 residues: Crinkler effector protein 8 (599 aa).

The signal sequence occupies residues 1-17 (MVTLFCAVVGVAGSTFP). Positions 18–52 (VDINENKSVGHLKKAIKEEKMYQFPADELQLFLAK) are LQLFLAK domain. Asn-23 carries an N-linked (GlcNAc...) asparagine glycan. The tract at residues 53–109 (AGGNAWLSSLTEDVKKLKKGEKTALVKSLTQEEKELQGEDPISECLEGMDPPKVKQI) is DWL domain. The short motif at 110-116 (HVLVALP) is the HVLVXXP motif element. Residues 117–590 (PGTSSAPISD…EAAEQESQGK (474 aa)) are C-terminal D2 effector domain. Phosphoserine occurs at positions 249, 281, and 385. Positions 289–590 (LSKKLVWSYG…EAAEQESQGK (302 aa)) constitute a Protein kinase domain. Asp-470 functions as the Proton acceptor in the catalytic mechanism. Phosphoserine is present on residues Ser-474 and Ser-587. The tract at residues 577–599 (RFEREAAEQESQGKGVRKKHRRA) is disordered. Positions 590 to 599 (KGVRKKHRRA) match the Host nuclear localization signal motif.

It in the N-terminal section; belongs to the Crinkler effector family. This sequence in the C-terminal section; belongs to the protein kinase superfamily. Dimerizes in host plants. Autophosphorylated at Ser-249, Ser-281, Ser-385, Ser-474 and Ser-587. Additional serines or threonines are also targeted for phosphorylation.

The protein localises to the secreted. The protein resides in the host nucleus. The catalysed reaction is L-seryl-[protein] + ATP = O-phospho-L-seryl-[protein] + ADP + H(+). The enzyme catalyses L-threonyl-[protein] + ATP = O-phospho-L-threonyl-[protein] + ADP + H(+). Its function is as follows. Secreted effector that induces cell death when expressed in host plants. Acts as a kinase and is able to autophosphorylate, however its cell death inducing ability is not a direct result of its kinase activity, but rather a consequence of the phosphorylated state of the five identified serine residues in the CRN8 protein. In Phytophthora infestans (Potato late blight agent), this protein is Crinkler effector protein 8.